A 998-amino-acid polypeptide reads, in one-letter code: Kinesin-like protein KIF19 (998 aa).

The region spanning 11–346 (QLMVALRVRP…LTYAGRAKNI (336 aa)) is the Kinesin motor domain. Residue 104–111 (GPTGCGKT) coordinates ATP. 2 coiled-coil regions span residues 360–391 (HIAQ…RGQA) and 424–452 (EQLA…EVQI). The segment covering 482–494 (ECYAKDDSEKDSD) has biased composition (basic and acidic residues). The interval 482-503 (ECYAKDDSEKDSDTGDDQPDIL) is disordered. The stretch at 507–552 (EVAAARESIAALVDEQKQLRKQKLALEQRCRELRARGRRLEETLPR) forms a coiled coil. 4 stretches are compositionally biased toward polar residues: residues 662-676 (SSLP…SLTP), 684-697 (KTLS…QNSA), 746-761 (SLGS…SENL), and 836-852 (TLQH…STGE). Disordered regions lie at residues 662 to 706 (SSLP…TESE), 746 to 765 (SLGS…SEIP), 794 to 911 (GTEG…THLL), and 948 to 998 (KLPP…SRHN). Residues 989–998 (HGKDGCSRHN) are compositionally biased toward basic and acidic residues.

Belongs to the TRAFAC class myosin-kinesin ATPase superfamily. Kinesin family.

It localises to the cytoplasm. Its subcellular location is the cytoskeleton. The protein resides in the cell projection. It is found in the cilium. Functionally, plus end-directed microtubule-dependent motor protein that regulates the length of motile cilia by mediating depolymerization of microtubules at ciliary tips. This is Kinesin-like protein KIF19 (KIF19) from Homo sapiens (Human).